Here is a 136-residue protein sequence, read N- to C-terminus: Large ribosomal subunit protein uL16c (136 aa).

This sequence belongs to the universal ribosomal protein uL16 family. Part of the 50S ribosomal subunit.

Its subcellular location is the plastid. The protein resides in the chloroplast. In Oryza nivara (Indian wild rice), this protein is Large ribosomal subunit protein uL16c.